An 877-amino-acid chain; its full sequence is DNA (cytosine-5)-methyltransferase 3A (877 aa).

3 disordered regions span residues 1-154 (MVES…MQRH), 194-250 (EETP…PEYE), and 412-431 (AYAP…EKPK). 2 stretches are compositionally biased toward basic and acidic residues: residues 107–133 (KLLE…EGSR) and 195–206 (ETPRAEPQKEEE). Residues 210–225 (PASQQPTDPASPNVAT) are compositionally biased toward polar residues. Positions 226 to 284 (TPEPVVADAVDKNTSKSADDEPEYEDGRGLGIGELVWGKLRGFSWWPGRIVSWWMTGRS) constitute a PWWP domain. Over residues 234-244 (AVDKNTSKSAD) the composition is skewed to basic and acidic residues. Residues 447–579 (EVRQKCRNIE…LQMFFANNHD (133 aa)) form the ADD domain. Residues 458 to 488 (ICISCGSLNVTLEHPLFIGGMCQNCKNCFLE) form a GATA-type; atypical zinc finger. The PHD-type; atypical zinc finger occupies 499-555 (QSYCTICCGGREVLMCGNNNCCRCFCVECVDLLVGPGAAQAAIKEDPWNCYMCGHKG). The 279-residue stretch at 599-877 (IRVLSLFDGI…APLKEYFACV (279 aa)) folds into the SAM-dependent MTase C5-type domain. S-adenosyl-L-methionine-binding positions include 606–610 (DGIAT), E629, and 651–653 (DVR). Residue C675 is part of the active site. Residue 856–858 (RSW) coordinates S-adenosyl-L-methionine.

The protein belongs to the class I-like SAM-binding methyltransferase superfamily. C5-methyltransferase family.

It is found in the nucleus. Its subcellular location is the chromosome. The protein localises to the cytoplasm. It carries out the reaction a 2'-deoxycytidine in DNA + S-adenosyl-L-methionine = a 5-methyl-2'-deoxycytidine in DNA + S-adenosyl-L-homocysteine + H(+). The catalysed reaction is L-cysteinyl-[protein] + S-adenosyl-L-methionine = S-methyl-L-cysteinyl-[protein] + S-adenosyl-L-homocysteine + H(+). Functionally, required for genome-wide de novo methylation and is essential for development. DNA methylation is coordinated with methylation of histones. It modifies DNA in a non-processive manner and also methylates non-CpG sites. Acts as a transcriptional corepressor for ZNF238. Can actively repress transcription through the recruitment of HDAC activity. Also has weak auto-methylation activity on some Cys residue in absence of DNA. The sequence is that of DNA (cytosine-5)-methyltransferase 3A (DNMT3A) from Gallus gallus (Chicken).